Here is a 135-residue protein sequence, read N- to C-terminus: Large ribosomal subunit protein eL32 (135 aa).

Belongs to the eukaryotic ribosomal protein eL32 family.

This chain is Large ribosomal subunit protein eL32 (rpl32e), found in Methanococcus maripaludis (strain DSM 14266 / JCM 13030 / NBRC 101832 / S2 / LL).